The primary structure comprises 94 residues: Aspartyl/glutamyl-tRNA(Asn/Gln) amidotransferase subunit C (94 aa).

Belongs to the GatC family. As to quaternary structure, heterotrimer of A, B and C subunits.

The catalysed reaction is L-glutamyl-tRNA(Gln) + L-glutamine + ATP + H2O = L-glutaminyl-tRNA(Gln) + L-glutamate + ADP + phosphate + H(+). It carries out the reaction L-aspartyl-tRNA(Asn) + L-glutamine + ATP + H2O = L-asparaginyl-tRNA(Asn) + L-glutamate + ADP + phosphate + 2 H(+). Its function is as follows. Allows the formation of correctly charged Asn-tRNA(Asn) or Gln-tRNA(Gln) through the transamidation of misacylated Asp-tRNA(Asn) or Glu-tRNA(Gln) in organisms which lack either or both of asparaginyl-tRNA or glutaminyl-tRNA synthetases. The reaction takes place in the presence of glutamine and ATP through an activated phospho-Asp-tRNA(Asn) or phospho-Glu-tRNA(Gln). This is Aspartyl/glutamyl-tRNA(Asn/Gln) amidotransferase subunit C from Syntrophomonas wolfei subsp. wolfei (strain DSM 2245B / Goettingen).